The primary structure comprises 239 residues: Ribonuclease PH (239 aa).

Residues Arg86 and 124 to 126 (GTR) contribute to the phosphate site.

It belongs to the RNase PH family. Homohexameric ring arranged as a trimer of dimers.

The enzyme catalyses tRNA(n+1) + phosphate = tRNA(n) + a ribonucleoside 5'-diphosphate. In terms of biological role, phosphorolytic 3'-5' exoribonuclease that plays an important role in tRNA 3'-end maturation. Removes nucleotide residues following the 3'-CCA terminus of tRNAs; can also add nucleotides to the ends of RNA molecules by using nucleoside diphosphates as substrates, but this may not be physiologically important. Probably plays a role in initiation of 16S rRNA degradation (leading to ribosome degradation) during starvation. This chain is Ribonuclease PH, found in Cupriavidus necator (strain ATCC 17699 / DSM 428 / KCTC 22496 / NCIMB 10442 / H16 / Stanier 337) (Ralstonia eutropha).